The sequence spans 445 residues: Serine--tRNA ligase (445 aa).

Position 229–231 (229–231 (TAE)) interacts with L-serine. Residues 260-262 (RKE) and Val-276 contribute to the ATP site. Residue Glu-283 coordinates L-serine. 347 to 350 (EVSS) lines the ATP pocket. Ser-383 is a binding site for L-serine.

It belongs to the class-II aminoacyl-tRNA synthetase family. Type-1 seryl-tRNA synthetase subfamily. Homodimer. The tRNA molecule binds across the dimer.

The protein localises to the cytoplasm. The catalysed reaction is tRNA(Ser) + L-serine + ATP = L-seryl-tRNA(Ser) + AMP + diphosphate + H(+). The enzyme catalyses tRNA(Sec) + L-serine + ATP = L-seryl-tRNA(Sec) + AMP + diphosphate + H(+). Its pathway is aminoacyl-tRNA biosynthesis; selenocysteinyl-tRNA(Sec) biosynthesis; L-seryl-tRNA(Sec) from L-serine and tRNA(Sec): step 1/1. Functionally, catalyzes the attachment of serine to tRNA(Ser). Is also able to aminoacylate tRNA(Sec) with serine, to form the misacylated tRNA L-seryl-tRNA(Sec), which will be further converted into selenocysteinyl-tRNA(Sec). In Thermomicrobium roseum (strain ATCC 27502 / DSM 5159 / P-2), this protein is Serine--tRNA ligase.